The chain runs to 120 residues: UPF0102 protein COXBURSA331_A1934 (120 aa).

Belongs to the UPF0102 family.

In Coxiella burnetii (strain RSA 331 / Henzerling II), this protein is UPF0102 protein COXBURSA331_A1934.